The primary structure comprises 580 residues: F-box only protein 24 (580 aa).

The F-box domain maps to P36–I82. The RCC1 repeat unit spans residues G376–S425.

As to quaternary structure, directly interacts with SKP1 and CUL1.

Functionally, substrate-recognition component of the SCF (SKP1-CUL1-F-box protein)-type E3 ubiquitin ligase complex. This is F-box only protein 24 (FBXO24) from Homo sapiens (Human).